A 198-amino-acid polypeptide reads, in one-letter code: Small ribosomal subunit protein uS4c (198 aa).

In terms of domain architecture, S4 RNA-binding spans 85–145 (LRLDATIFRL…PKKFTIILIC (61 aa)).

Belongs to the universal ribosomal protein uS4 family. In terms of assembly, part of the 30S ribosomal subunit.

It localises to the plastid. Its subcellular location is the apicoplast. Functionally, one of the primary rRNA binding proteins, it binds directly to 16S rRNA where it nucleates assembly of the body of the 30S subunit. In Toxoplasma gondii, this protein is Small ribosomal subunit protein uS4c (rps4).